A 52-amino-acid chain; its full sequence is MASKNREIIKLKSSESSDMYWTVKNKRKTTGRLELKKYDRKLRRHVIFKEAK.

This sequence belongs to the bacterial ribosomal protein bL33 family.

The protein is Large ribosomal subunit protein bL33 of Chlamydia abortus (strain DSM 27085 / S26/3) (Chlamydophila abortus).